Consider the following 285-residue polypeptide: Ribosomal protein L11 methyltransferase (285 aa).

S-adenosyl-L-methionine-binding residues include threonine 131, glycine 154, aspartate 176, and asparagine 223.

The protein belongs to the methyltransferase superfamily. PrmA family.

Its subcellular location is the cytoplasm. It carries out the reaction L-lysyl-[protein] + 3 S-adenosyl-L-methionine = N(6),N(6),N(6)-trimethyl-L-lysyl-[protein] + 3 S-adenosyl-L-homocysteine + 3 H(+). Its function is as follows. Methylates ribosomal protein L11. This is Ribosomal protein L11 methyltransferase from Brucella suis (strain ATCC 23445 / NCTC 10510).